The following is a 155-amino-acid chain: uncharacterized protein (155 aa).

A signal peptide spans 1-23 (MRLMRNLMNALLLGAAASSLAVA). C86 and C91 are oxidised to a cystine.

The protein belongs to the ivy family.

Its subcellular location is the periplasm. This is an uncharacterized protein from Pseudomonas aeruginosa (strain ATCC 15692 / DSM 22644 / CIP 104116 / JCM 14847 / LMG 12228 / 1C / PRS 101 / PAO1).